The sequence spans 159 residues: Cyclic pyranopterin monophosphate synthase (159 aa).

Residues 75–77 and 113–114 each bind substrate; these read LCH and ME. Asp128 is an active-site residue.

This sequence belongs to the MoaC family. As to quaternary structure, homohexamer; trimer of dimers.

It carries out the reaction (8S)-3',8-cyclo-7,8-dihydroguanosine 5'-triphosphate = cyclic pyranopterin phosphate + diphosphate. It participates in cofactor biosynthesis; molybdopterin biosynthesis. In terms of biological role, catalyzes the conversion of (8S)-3',8-cyclo-7,8-dihydroguanosine 5'-triphosphate to cyclic pyranopterin monophosphate (cPMP). This Cereibacter sphaeroides (strain ATCC 17023 / DSM 158 / JCM 6121 / CCUG 31486 / LMG 2827 / NBRC 12203 / NCIMB 8253 / ATH 2.4.1.) (Rhodobacter sphaeroides) protein is Cyclic pyranopterin monophosphate synthase.